The following is a 248-amino-acid chain: Triosephosphate isomerase (248 aa).

9–11 contacts substrate; sequence NWK. The active-site Electrophile is the His-92. Glu-164 acts as the Proton acceptor in catalysis. Residues Gly-170, Ser-210, and 231 to 232 contribute to the substrate site; that span reads GG.

It belongs to the triosephosphate isomerase family. Homodimer.

It is found in the cytoplasm. It carries out the reaction D-glyceraldehyde 3-phosphate = dihydroxyacetone phosphate. It participates in carbohydrate biosynthesis; gluconeogenesis. It functions in the pathway carbohydrate degradation; glycolysis; D-glyceraldehyde 3-phosphate from glycerone phosphate: step 1/1. In terms of biological role, involved in the gluconeogenesis. Catalyzes stereospecifically the conversion of dihydroxyacetone phosphate (DHAP) to D-glyceraldehyde-3-phosphate (G3P). The chain is Triosephosphate isomerase from Mycoplasma capricolum subsp. capricolum (strain California kid / ATCC 27343 / NCTC 10154).